The sequence spans 150 residues: Con-Ins Im1 (150 aa).

An N-terminal signal peptide occupies residues M1–A25. Intrachain disulfides connect C31–C133, C46–C136, C58–C149, and C135–C140. The propeptide at G64–P111 is c peptide. The residue at position 144 (E144) is a 4-carboxyglutamate; partial.

The protein belongs to the insulin family. Heterodimer of A and B chains; disulfide-linked. Expressed by the venom gland.

The protein resides in the secreted. Functionally, this venom insulin facilitates prey capture by rapidly inducing hypoglycemic shock. Intraperitoneal injection of this peptide into zebrafish lowers blood glucose with the same potency than human insulin. In vivo, when applied to water, this peptide reduces overall locomotor activity of zebrafish larvae, observed as a significant decrease in the percentage of time spent swimming and movement frequency. This Conus imperialis (Imperial cone) protein is Con-Ins Im1.